We begin with the raw amino-acid sequence, 622 residues long: Pyranose 2-oxidase (622 aa).

The signal sequence occupies residues 1-28; that stretch reads MSASSSDPFHSFAKTSFTSKAAKRATAH. A propeptide spanning residues 29–37 is cleaved from the precursor; the sequence is SLPPLPGPG. Residue H167 is modified to Tele-8alpha-FAD histidine. Residues Q449 and H451 each coordinate substrate. H546 serves as the catalytic Proton acceptor. N591 is an active-site residue.

The protein belongs to the GMC oxidoreductase family. In terms of assembly, homotetramer. The cofactor is FAD.

The protein localises to the periplasm. The enzyme catalyses D-glucose + O2 = 2-dehydro-D-glucose + H2O2. Catalyzes the oxidation of various aldopyranoses and disaccharides on carbon-2 to the corresponding 2-keto sugars concomitant with the reduction of O(2) to H(2)O(2). Plays an important role in lignin degradation of wood rot fungi by supplying the essential cosubstrate H(2)O(2) for the ligninolytic peroxidases, lignin peroxidase and manganese-dependent peroxidase. The preferred substrate is D-glucose which is converted to 2-dehydro-D-glucose, an intermediate of a secondary metabolic pathway leading to the antibiotic cortalcerone. Also acts on D-xylose, together with D-glucose the major sugars derived from wood, on L-sorbose, D-galactose and 1,5-anhydroglucitol, a diagnostic marker of diabetes mellitus. The protein is Pyranose 2-oxidase (P2OX) of Trametes hirsuta (White-rot fungus).